A 745-amino-acid polypeptide reads, in one-letter code: MELFNKEEASFETLLKRLLVVCESHSRYHGSSLDPMVKVGHEMRKISGYLRCILRKHAANHDDMSLTQSIVNSYKSLFKDAQILDLYHNLLFGCMHLLLDANMSYFRMDSQKLFAVLLFKVYYKLRDIFYVTNEVRLGSLISAFVYKFKSCYDFISCNSLKYGSVRDVISGEVSLINLPPIDSNKVINRAYYRLDVKKLAINNKLVEILELDNGEIAIFEVLSEKMPYTLQTIDNLFQSLALGNHDLMNVGRSLLFRPFRSGDLDLIRLDDSGAKLKVPINNSIVLRLTCKDPIQWQEYWKHVIRKLFDSTATKEYKRSGSKISQQVYVRSNNPDYTSPKRNDDMPISSVKISDTIHNGRTLHRSIPLPGSLSSLIETSNEYPDEESLSIMSERATVSEDSDLDTSLKDIESLSCEKLIELDKSIQVPLSPKYMDTPTLKNIRTASQTFSLESVSPELIESVASEIDDSESIISEDGKDKRDKDLFDPDIDFYKPTLYRRKSSSLLSIFSKNKKNLTIDIPKNHSRSLFSLPGNQQSVTPVSATPHDDNVDETYVSFPLSINTSGGAVYFENDSVKVSLWNGKSWVPLSKDMLCLSLILSGDNETLLIVYKDFEKEKCKLVVKLEPTWKYNRSTAQDVQLRIPSSDFKASVFGTLHDLTLSIRCAQAAKLVNVLQYQLQSSQTSSLSPSTTTGTLSTVSSSSCFSRNVTRSSTENSELANMKDSSEYISSSLLLSSVKVRQLRNM.

It belongs to the UPF0508 family.

In Saccharomyces cerevisiae (strain ATCC 204508 / S288c) (Baker's yeast), this protein is UPF0508 protein YJR030C.